The following is a 318-amino-acid chain: Homoserine kinase (318 aa).

97-107 (PIGSGLGSSAC) is an ATP binding site.

Belongs to the GHMP kinase family. Homoserine kinase subfamily.

It is found in the cytoplasm. It carries out the reaction L-homoserine + ATP = O-phospho-L-homoserine + ADP + H(+). The protein operates within amino-acid biosynthesis; L-threonine biosynthesis; L-threonine from L-aspartate: step 4/5. Its function is as follows. Catalyzes the ATP-dependent phosphorylation of L-homoserine to L-homoserine phosphate. The polypeptide is Homoserine kinase (Vibrio cholerae serotype O1 (strain M66-2)).